The primary structure comprises 160 residues: UPF0260 protein GDI1595/Gdia_1801 (160 aa).

This sequence belongs to the UPF0260 family.

This is UPF0260 protein GDI1595/Gdia_1801 from Gluconacetobacter diazotrophicus (strain ATCC 49037 / DSM 5601 / CCUG 37298 / CIP 103539 / LMG 7603 / PAl5).